The following is a 194-amino-acid chain: A-type ATP synthase subunit E (194 aa).

A disordered region spans residues 35 to 56 (DAEADADQIREEREAEVERTIE). Residues 41-56 (DQIREEREAEVERTIE) are compositionally biased toward basic and acidic residues.

The protein belongs to the V-ATPase E subunit family. As to quaternary structure, has multiple subunits with at least A(3), B(3), C, D, E, F, H, I and proteolipid K(x).

The protein localises to the cell membrane. Functionally, component of the A-type ATP synthase that produces ATP from ADP in the presence of a proton gradient across the membrane. This Haloarcula marismortui (strain ATCC 43049 / DSM 3752 / JCM 8966 / VKM B-1809) (Halobacterium marismortui) protein is A-type ATP synthase subunit E.